The following is a 506-amino-acid chain: MEEFQGYLELDRYQQHDFLYPLIFREYIYALAHDHGLNRSILLDNVGYDNKSSLLIIKRLISRMYKQNHFFISANDSNQKKKLGYNKNLYSQKISEGFTVIVEISFSLQLVSSLEATKTVKSYNLRSIHSIFPFLEDKFPHLNYVSDVLIPYPIHLEILVQTLRYWVKDASSLHLLRLFLHEYYNWNSLITSNNFFFSKSNPRLFLLLYNSHVCEYEFILLFLRNQSSHLQLTSSGIFFERIHFYEKIKYPVEEVFANDFPASILWFFKDPFMHYVRYQGKSILASKDTPLLMNKWKYYLVNLWQCHSYVWSQPGRIYINKLSKHSLDFLGYFSSIRPNLSVVRSQMLENSFITDNAMKKLDTLVPIIPLIGSLAKVKFCNALGHPISKSTWADSSDFDIIDRFLRICRNLSHYYSGSSRKKSLYRIKYILRLSCLKTLARKHKSTVRTFLKRLGSKLLEEFFTEEEQILSLVFPRASYTFTFKKFYRGRIWYLDIFCINDLINYE.

The protein belongs to the intron maturase 2 family. MatK subfamily.

It localises to the plastid. The protein resides in the chloroplast. Its function is as follows. Usually encoded in the trnK tRNA gene intron. Probably assists in splicing its own and other chloroplast group II introns. This Prunus dulcis (Almond) protein is Maturase K.